A 265-amino-acid chain; its full sequence is Glutamate racemase (265 aa).

Substrate is bound by residues 12–13 (DS) and 44–45 (YG). Cysteine 75 functions as the Proton donor/acceptor in the catalytic mechanism. 76-77 (NT) is a substrate binding site. Catalysis depends on cysteine 186, which acts as the Proton donor/acceptor. 187 to 188 (TH) is a binding site for substrate.

The protein belongs to the aspartate/glutamate racemases family.

It catalyses the reaction L-glutamate = D-glutamate. Its pathway is cell wall biogenesis; peptidoglycan biosynthesis. Functionally, provides the (R)-glutamate required for cell wall biosynthesis. This is Glutamate racemase from Pseudomonas entomophila (strain L48).